A 316-amino-acid chain; its full sequence is MELRPLVMCFALCVVYASSKPTIEKKDRVHHDDPLSSRDHEDAENFDYDHEAFLGQDEAKTFDQLTPEESKERLGMLVERIDEDKDGYVSVEEMKKWIKHSQKRWIYDDVDRQWKGHDHNGDGLVSWEEYKNATYGYILDDPDPEDGFSYRQMISRDERRFKMSDLDADLKANKEEFTAFLHPEEYDHMKDIVVLETMEDIDKNGDGFIDLEEYIGDMYNQEGDPSEPEWVRTEREQFTEFRDTNKDGRMDKEETKDWILPSDYDHAEAEAKHLVYESDNDKDGKLTKAEIVEKYDLFVGSQATDFGEALARHDEF.

Residues 1 to 19 form the signal peptide; it reads MELRPLVMCFALCVVYASS. 6 consecutive EF-hand domains span residues 69-104, 105-140, 152-187, 189-224, 230-265, and 266-301; these read ESKE…SQKR, WIYD…YILD, QMIS…EEYD, MKDI…QEGD, WVRT…SDYD, and HAEA…FVGS. Ca(2+) is bound by residues aspartate 82, aspartate 84, aspartate 86, tyrosine 88, glutamate 93, aspartate 118, asparagine 120, aspartate 122, and glutamate 129. Asparagine 132 is a glycosylation site (N-linked (GlcNAc...) asparagine). Residues aspartate 165, aspartate 167, aspartate 169, lysine 171, glutamate 176, aspartate 202, asparagine 204, aspartate 206, glutamate 213, aspartate 243, asparagine 245, aspartate 247, arginine 249, glutamate 254, aspartate 279, aspartate 281, aspartate 283, lysine 285, and glutamate 290 each contribute to the Ca(2+) site. The Prevents secretion from ER motif lies at 313–316; the sequence is HDEF.

This sequence belongs to the CREC family. In terms of assembly, interacts with ggcx.

Its subcellular location is the endoplasmic reticulum membrane. The protein localises to the golgi apparatus. It is found in the secreted. The protein resides in the melanosome. It localises to the sarcoplasmic reticulum lumen. In terms of biological role, involved in regulation of vitamin K-dependent carboxylation of multiple N-terminal glutamate residues. Seems to inhibit gamma-carboxylase ggcx. Binds 7 calcium ions with a low affinity. This Salmo salar (Atlantic salmon) protein is Calumenin-B (calub).